The primary structure comprises 427 residues: Methylenetetrahydrofolate--tRNA-(uracil-5-)-methyltransferase TrmFO (427 aa).

Residue 8–13 participates in FAD binding; sequence GAGISG.

The protein belongs to the MnmG family. TrmFO subfamily. FAD is required as a cofactor.

Its subcellular location is the cytoplasm. It catalyses the reaction uridine(54) in tRNA + (6R)-5,10-methylene-5,6,7,8-tetrahydrofolate + NADH + H(+) = 5-methyluridine(54) in tRNA + (6S)-5,6,7,8-tetrahydrofolate + NAD(+). The enzyme catalyses uridine(54) in tRNA + (6R)-5,10-methylene-5,6,7,8-tetrahydrofolate + NADPH + H(+) = 5-methyluridine(54) in tRNA + (6S)-5,6,7,8-tetrahydrofolate + NADP(+). Its function is as follows. Catalyzes the folate-dependent formation of 5-methyl-uridine at position 54 (M-5-U54) in all tRNAs. The chain is Methylenetetrahydrofolate--tRNA-(uracil-5-)-methyltransferase TrmFO from Mycoplasmopsis agalactiae (strain NCTC 10123 / CIP 59.7 / PG2) (Mycoplasma agalactiae).